A 497-amino-acid polypeptide reads, in one-letter code: Probable malate:quinone oxidoreductase (497 aa).

This sequence belongs to the MQO family. It depends on FAD as a cofactor.

The catalysed reaction is (S)-malate + a quinone = a quinol + oxaloacetate. It functions in the pathway carbohydrate metabolism; tricarboxylic acid cycle; oxaloacetate from (S)-malate (quinone route): step 1/1. The protein is Probable malate:quinone oxidoreductase of Rhodopseudomonas palustris (strain ATCC BAA-98 / CGA009).